The primary structure comprises 136 residues: Histone H3 (136 aa).

The disordered stretch occupies residues 1–42; it reads MARTKQTARKSTGGKAPRKQLATKAAAKSAPATGGVKKPHRY. Position 5 is an N6-methylated lysine (lysine 5). An N6-acetyllysine; alternate modification is found at lysine 10. Lysine 10 bears the N6-methylated lysine; alternate mark. Residue serine 11 is modified to Phosphoserine. 2 positions are modified to N6-acetyllysine: lysine 15 and lysine 24. Over residues 22–33 the composition is skewed to low complexity; it reads ATKAAAKSAPAT. N6-methylated lysine occurs at positions 28, 37, and 80.

It belongs to the histone H3 family. The nucleosome is a histone octamer containing two molecules each of H2A, H2B, H3 and H4 assembled in one H3-H4 heterotetramer and two H2A-H2B heterodimers. The octamer wraps approximately 147 bp of DNA. Post-translationally, acetylation is generally linked to gene activation. Methylation at Lys-5 is linked to gene activation. Methylation at Lys-10 is linked to gene repression.

The protein resides in the nucleus. It localises to the chromosome. Functionally, core component of nucleosome. Nucleosomes wrap and compact DNA into chromatin, limiting DNA accessibility to the cellular machineries which require DNA as a template. Histones thereby play a central role in transcription regulation, DNA repair, DNA replication and chromosomal stability. DNA accessibility is regulated via a complex set of post-translational modifications of histones, also called histone code, and nucleosome remodeling. The protein is Histone H3 of Acropora formosa (Staghorn coral).